Reading from the N-terminus, the 406-residue chain is 2,3-bisphosphoglycerate-independent phosphoglycerate mutase (406 aa).

Positions 156-165 (ITEGDPHKEG) are enriched in basic and acidic residues. A disordered region spans residues 156–177 (ITEGDPHKEGVPIPEVKPLDNS).

This sequence belongs to the BPG-independent phosphoglycerate mutase family. A-PGAM subfamily.

It catalyses the reaction (2R)-2-phosphoglycerate = (2R)-3-phosphoglycerate. The protein operates within carbohydrate degradation; glycolysis; pyruvate from D-glyceraldehyde 3-phosphate: step 3/5. Its function is as follows. Catalyzes the interconversion of 2-phosphoglycerate and 3-phosphoglycerate. This is 2,3-bisphosphoglycerate-independent phosphoglycerate mutase from Methanococcus aeolicus (strain ATCC BAA-1280 / DSM 17508 / OCM 812 / Nankai-3).